Here is a 1016-residue protein sequence, read N- to C-terminus: KN motif and ankyrin repeat domain-containing protein 4 (1016 aa).

Disordered stretches follow at residues 1–26 (MEKI…YPYS), 70–91 (PRNF…QQNW), 235–259 (AEPE…AVQS), 401–485 (LSQE…LPRG), 506–563 (EEGS…SPQD), and 622–755 (AQAP…VSHL). 2 stretches are compositionally biased toward polar residues: residues 70 to 80 (PRNFSLPNSGD) and 246 to 258 (SHLS…SAVQ). A coiled-coil region spans residues 346 to 409 (SSLKNQVLAL…KLSQERASEA (64 aa)). Composition is skewed to basic and acidic residues over residues 401–414 (LSQE…DRTD) and 445–454 (PECRAPRAEK). Polar residues predominate over residues 460 to 469 (VQNNHKQSYP). Positions 632 to 650 (TPAPPPSTPPPPPPPPPEI) are enriched in pro residues. Threonine 639 carries the post-translational modification Phosphothreonine. Positions 695–708 (TSGEDSSPEDLSDS) are enriched in acidic residues. Basic and acidic residues-rich tracts occupy residues 709-727 (ETEK…DLHP) and 745-755 (TSDRGEEVSHL). ANK repeat units follow at residues 838–868 (SGNT…NVDH), 877–905 (VMIT…NVNI), 910–939 (GGQT…DVNL), 943–973 (DGSS…NSSL), and 977–1007 (AGRT…PGRS).

Its subcellular location is the cytoplasm. Its function is as follows. May be involved in the control of cytoskeleton formation by regulating actin polymerization. This Mus musculus (Mouse) protein is KN motif and ankyrin repeat domain-containing protein 4 (Kank4).